We begin with the raw amino-acid sequence, 989 residues long: DEAD-box ATP-dependent RNA helicase 45 (989 aa).

2 stretches are compositionally biased toward basic and acidic residues: residues 1–39 (MLEK…KRCD) and 64–101 (RDSK…EKEK). Disordered regions lie at residues 1–248 (MLEK…AADE) and 305–330 (QGED…DDEE). A coiled-coil region spans residues 88–182 (LKRDRERRER…ELKRQNEEAQ (95 aa)). S119 is modified (phosphoserine). Over residues 134–179 (SRHGDDDVEKKTRDEQVEDEQKQLAEEVEKRRRRVQEWQELKRQNE) the composition is skewed to basic and acidic residues. Residue S200 is modified to Phosphoserine. A compositionally biased stretch (basic and acidic residues) spans 203 to 222 (EVKSDSEMDVDRDTKLENGG). A compositionally biased stretch (polar residues) spans 230–239 (ENETAVTVSE). Residues 321-330 (DPSLDEDDEE) are compositionally biased toward acidic residues. The Q motif motif lies at 396-424 (QFWHQTGLTSKILDTLKKLNYEKPMPIQA). The 179-residue stretch at 427 to 605 (LPIIMSGRDC…RKVLNKPVEI (179 aa)) folds into the Helicase ATP-binding domain. 440–447 (AKTGSGKT) serves as a coordination point for ATP. A DEAD box motif is present at residues 553–556 (DEAD). A Helicase C-terminal domain is found at 590-748 (QVETLARKVL…PVPDDVKAVA (159 aa)).

The protein belongs to the DEAD box helicase family. DDX46/PRP5 subfamily.

The catalysed reaction is ATP + H2O = ADP + phosphate + H(+). In Arabidopsis thaliana (Mouse-ear cress), this protein is DEAD-box ATP-dependent RNA helicase 45 (RH45).